The primary structure comprises 386 residues: Succinate--CoA ligase [ADP-forming] subunit beta (386 aa).

In terms of domain architecture, ATP-grasp spans 9-235 (KELFAKHDVP…REEEDPLESA (227 aa)). ATP-binding positions include lysine 44, 51-53 (GRG), alanine 93, and glutamate 98. Positions 190 and 204 each coordinate Mg(2+). Substrate contacts are provided by residues asparagine 255 and 317–319 (GIT).

It belongs to the succinate/malate CoA ligase beta subunit family. As to quaternary structure, heterotetramer of two alpha and two beta subunits. Mg(2+) serves as cofactor.

It catalyses the reaction succinate + ATP + CoA = succinyl-CoA + ADP + phosphate. It carries out the reaction GTP + succinate + CoA = succinyl-CoA + GDP + phosphate. It participates in carbohydrate metabolism; tricarboxylic acid cycle; succinate from succinyl-CoA (ligase route): step 1/1. Its function is as follows. Succinyl-CoA synthetase functions in the citric acid cycle (TCA), coupling the hydrolysis of succinyl-CoA to the synthesis of either ATP or GTP and thus represents the only step of substrate-level phosphorylation in the TCA. The beta subunit provides nucleotide specificity of the enzyme and binds the substrate succinate, while the binding sites for coenzyme A and phosphate are found in the alpha subunit. This Nocardioides sp. (strain ATCC BAA-499 / JS614) protein is Succinate--CoA ligase [ADP-forming] subunit beta.